A 675-amino-acid chain; its full sequence is Potassium-transporting ATPase ATP-binding subunit (675 aa).

Helical transmembrane passes span 38-58, 67-87, 216-236, and 253-273; these read VMFV…ANLV, LAIT…EGMA, IALS…VVTL, and IALL…AIGI. Residue aspartate 304 is the 4-aspartylphosphate intermediate of the active site. Residues aspartate 341, glutamate 345, 371–378, and lysine 389 each bind ATP; that span reads FTAQTRMS. Mg(2+)-binding residues include aspartate 512 and aspartate 516. 3 helical membrane-spanning segments follow: residues 582-602, 610-630, and 654-674; these read FAIL…LNVM, AVLS…PLAL, and GGIL…GGLM.

It belongs to the cation transport ATPase (P-type) (TC 3.A.3) family. Type IA subfamily. The system is composed of three essential subunits: KdpA, KdpB and KdpC.

It is found in the cell membrane. It catalyses the reaction K(+)(out) + ATP + H2O = K(+)(in) + ADP + phosphate + H(+). Part of the high-affinity ATP-driven potassium transport (or Kdp) system, which catalyzes the hydrolysis of ATP coupled with the electrogenic transport of potassium into the cytoplasm. This subunit is responsible for energy coupling to the transport system and for the release of the potassium ions to the cytoplasm. The protein is Potassium-transporting ATPase ATP-binding subunit of Deinococcus radiodurans (strain ATCC 13939 / DSM 20539 / JCM 16871 / CCUG 27074 / LMG 4051 / NBRC 15346 / NCIMB 9279 / VKM B-1422 / R1).